A 188-amino-acid chain; its full sequence is Elongation factor P (188 aa).

Lys-34 is subject to N6-(3,6-diaminohexanoyl)-5-hydroxylysine.

The protein belongs to the elongation factor P family. May be beta-lysylated on the epsilon-amino group of Lys-34 by the combined action of EpmA and EpmB, and then hydroxylated on the C5 position of the same residue by EpmC (if this protein is present). Lysylation is critical for the stimulatory effect of EF-P on peptide-bond formation. The lysylation moiety may extend toward the peptidyltransferase center and stabilize the terminal 3-CCA end of the tRNA. Hydroxylation of the C5 position on Lys-34 may allow additional potential stabilizing hydrogen-bond interactions with the P-tRNA.

Its subcellular location is the cytoplasm. It functions in the pathway protein biosynthesis; polypeptide chain elongation. In terms of biological role, involved in peptide bond synthesis. Alleviates ribosome stalling that occurs when 3 or more consecutive Pro residues or the sequence PPG is present in a protein, possibly by augmenting the peptidyl transferase activity of the ribosome. Modification of Lys-34 is required for alleviation. In Coxiella burnetii (strain CbuK_Q154) (Coxiella burnetii (strain Q154)), this protein is Elongation factor P.